We begin with the raw amino-acid sequence, 393 residues long: Venom metalloproteinase BumaMPs1 (393 aa).

The signal sequence occupies residues 1–15 (MFVHLLVLLFAAVEA). The N-linked (GlcNAc...) asparagine glycan is linked to asparagine 158. One can recognise a Peptidase M12B domain in the interval 167-377 (KCVKIEYVFV…RVEELITRRK (211 aa)). Zn(2+) is bound at residue histidine 323. The active site involves glutamate 324. Zn(2+) is bound by residues histidine 327 and histidine 333. Positions 378–393 (INHCIVETCDGKRKRN) are disintegrin-like domain.

Belongs to the venom metalloproteinase (M12B) family. Zn(2+) serves as cofactor. In terms of processing, contains several disulfide bonds. As to expression, expressed by the venom gland.

Its subcellular location is the secreted. Functionally, metalloprotease. In Olivierus martensii (Manchurian scorpion), this protein is Venom metalloproteinase BumaMPs1.